We begin with the raw amino-acid sequence, 177 residues long: Retrograde regulation protein 1 (177 aa).

Positions 1–24 are disordered; that stretch reads MSSIPAGTDPGSCGANFKNDRKRR. The 86-residue stretch at 11–96 folds into the bHLH domain; it reads GSCGANFKND…TQAVEYISHL (86 aa). Phosphoserine is present on residues S50 and S52. Disordered stretches follow at residues 52 to 82 and 147 to 177; these read SNDTLSESTPGALGLSSKAKGTGTKDGKPNK and LAATNDDSVRPPAKRLSSFEYGGYGEYGNGS. T60 bears the Phosphothreonine mark. The segment covering 168-177 has biased composition (gly residues); that stretch reads GGYGEYGNGS.

Binds DNA as a heterodimer with RTG3.

Its subcellular location is the nucleus. Its function is as follows. Required for a novel path of interorganelle communication between mitochondria, peroxisomes and the nucleus, thereby maintaining a functional metabolic interaction between the tricarboxylic acid and glyoxylate cycles. Transcription factor that regulates CIT2 gene expression. Binds to two identical sites oriented as inverted repeats 28 bp apart in a regulatory upstream activation sequence element (UASR) in the CIT2 promoter. The core binding site is 5'-GGTCAC-3'. This chain is Retrograde regulation protein 1 (RTG1), found in Saccharomyces cerevisiae (strain ATCC 204508 / S288c) (Baker's yeast).